Consider the following 967-residue polypeptide: RNA polymerase-associated protein RapA (967 aa).

One can recognise a Helicase ATP-binding domain in the interval 163-333; that stretch reads EVGKRHNPRV…FARLRLLDPN (171 aa). Position 176–183 (176–183) interacts with ATP; that stretch reads DEVGLGKT. Positions 279 to 282 match the DEAH box motif; it reads DEAH. The Helicase C-terminal domain maps to 489–660; that stretch reads RVEWLLGFLT…NYLAQPNELG (172 aa).

It belongs to the SNF2/RAD54 helicase family. RapA subfamily. As to quaternary structure, interacts with the RNAP. Has a higher affinity for the core RNAP than for the holoenzyme. Its ATPase activity is stimulated by binding to RNAP.

Functionally, transcription regulator that activates transcription by stimulating RNA polymerase (RNAP) recycling in case of stress conditions such as supercoiled DNA or high salt concentrations. Probably acts by releasing the RNAP, when it is trapped or immobilized on tightly supercoiled DNA. Does not activate transcription on linear DNA. Probably not involved in DNA repair. This chain is RNA polymerase-associated protein RapA, found in Proteus mirabilis (strain HI4320).